The chain runs to 158 residues: MLSPKRVKFRKQQRGRMRGVATRGNTIAFGEFALQAQECGWITSRQIEASRRAMTRYVKRGGKIWIRIFPDKPVTMRAAETRMGSGKGNPEFWVAVIKPGRILFEMGGEEITPEIAKEAMRLAQYKLPVKTKFIALGDEEKTAGAKTPAASKAVTVES.

Belongs to the universal ribosomal protein uL16 family. Part of the 50S ribosomal subunit.

Its function is as follows. Binds 23S rRNA and is also seen to make contacts with the A and possibly P site tRNAs. This Synechococcus sp. (strain CC9902) protein is Large ribosomal subunit protein uL16.